The sequence spans 1846 residues: Unconventional myosin-Vb (1846 aa).

Positions 8–60 (SRYTRVWIPDPDEVWRSAELTKDYKDGDESLQLRLEDDTILDYPIDVQNNQVP) constitute a Myosin N-terminal SH3-like domain. Residues 21–40 (VWRSAELTKDYKDGDESLQL) are requires for interaction with LIMA1. In terms of domain architecture, Myosin motor spans 69 to 763 (VGENDLTALS…QVAYLEKLRA (695 aa)). 163–170 (GESGAGKT) serves as a coordination point for ATP. The tract at residues 599 to 629 (VPATNTAKSRSSSKINVRSSRPLMKAPNKEH) is disordered. Low complexity predominate over residues 607–619 (SRSSSKINVRSSR). Residues 641-663 (LNLLMETLNATTPHYVRCIKPND) are actin-binding. 6 consecutive IQ domains span residues 767–788 (REAT…KYRR), 789–813 (LRAA…EHLR), 814–837 (RTRA…YCRV), 838–861 (RRAA…PPVL), 862–884 (TEHK…HFQR), and 885–914 (QRDA…EARS). 2 coiled-coil regions span residues 915–1272 (AEHL…ADQR) and 1334–1450 (LKQV…RHHE). Residues 1088-1122 (RDEQQTPGHRKNPSNQSSLESDSNYPSISTSEIGD) are disordered. Polar residues predominate over residues 1100 to 1120 (PSNQSSLESDSNYPSISTSEI). S1444 carries the phosphoserine modification. The Dilute domain maps to 1524 to 1801 (SSTINGIKKV…IRTIQAQLQE (278 aa)).

This sequence belongs to the TRAFAC class myosin-kinesin ATPase superfamily. Myosin family. As to quaternary structure, component of the CART complex, at least composed of ACTN4, HGS/HRS, MYO5B and TRIM3. Interacts with RAB11FIP2. Interacts with RAB11A and RAB8A. Found in a complex with CFTR and RAB11A. Interacts with NPC1L1. Interacts with LIMA1.

Its subcellular location is the cytoplasm. In terms of biological role, may be involved in vesicular trafficking via its association with the CART complex. The CART complex is necessary for efficient transferrin receptor recycling but not for EGFR degradation. Required in a complex with RAB11A and RAB11FIP2 for the transport of NPC1L1 to the plasma membrane. Together with RAB11A participates in CFTR trafficking to the plasma membrane and TF (transferrin) recycling in nonpolarized cells. Together with RAB11A and RAB8A participates in epithelial cell polarization. Together with RAB25 regulates transcytosis. Required for proper localization of bile salt export pump ABCB11 at the apical/canalicular plasma membrane of hepatocytes. The chain is Unconventional myosin-Vb (Myo5b) from Rattus norvegicus (Rat).